The primary structure comprises 161 residues: Nucleotide-binding protein lpg1167 (161 aa).

This sequence belongs to the YajQ family.

In terms of biological role, nucleotide-binding protein. The protein is Nucleotide-binding protein lpg1167 of Legionella pneumophila subsp. pneumophila (strain Philadelphia 1 / ATCC 33152 / DSM 7513).